The sequence spans 77 residues: Sec-independent protein translocase protein TatA (77 aa).

Residues 1-21 (MGGLSIWHWLIVLLIVALVFG) form a helical membrane-spanning segment. Residues 40–77 (KDGMREGEAPADPQQLPRSGSVNVDAKDATRSSDSNKA) are disordered. Positions 64–77 (DAKDATRSSDSNKA) are enriched in basic and acidic residues.

Belongs to the TatA/E family. As to quaternary structure, the Tat system comprises two distinct complexes: a TatABC complex, containing multiple copies of TatA, TatB and TatC subunits, and a separate TatA complex, containing only TatA subunits. Substrates initially bind to the TatABC complex, which probably triggers association of the separate TatA complex to form the active translocon.

It is found in the cell inner membrane. In terms of biological role, part of the twin-arginine translocation (Tat) system that transports large folded proteins containing a characteristic twin-arginine motif in their signal peptide across membranes. TatA could form the protein-conducting channel of the Tat system. This is Sec-independent protein translocase protein TatA from Burkholderia thailandensis (strain ATCC 700388 / DSM 13276 / CCUG 48851 / CIP 106301 / E264).